We begin with the raw amino-acid sequence, 311 residues long: Malate dehydrogenase (311 aa).

Residues 7 to 13 (GAAGGIG) and Asp-34 contribute to the NAD(+) site. Residues Arg-81 and Arg-87 each coordinate substrate. Residues Asn-94 and 117–119 (ITN) each bind NAD(+). The substrate site is built by Asn-119 and Arg-153. Residue His-177 is the Proton acceptor of the active site. Met-227 lines the NAD(+) pocket.

Belongs to the LDH/MDH superfamily. MDH type 1 family. Homodimer.

It catalyses the reaction (S)-malate + NAD(+) = oxaloacetate + NADH + H(+). In terms of biological role, catalyzes the reversible oxidation of malate to oxaloacetate. The polypeptide is Malate dehydrogenase (Shewanella putrefaciens (strain CN-32 / ATCC BAA-453)).